We begin with the raw amino-acid sequence, 323 residues long: tRNA U34 carboxymethyltransferase (323 aa).

Residues Lys90, Trp104, Lys109, Gly129, Ile182–Glu183, Met197, Tyr201, and Arg316 contribute to the carboxy-S-adenosyl-L-methionine site.

It belongs to the class I-like SAM-binding methyltransferase superfamily. CmoB family. As to quaternary structure, homotetramer.

It catalyses the reaction carboxy-S-adenosyl-L-methionine + 5-hydroxyuridine(34) in tRNA = 5-carboxymethoxyuridine(34) in tRNA + S-adenosyl-L-homocysteine + H(+). Catalyzes carboxymethyl transfer from carboxy-S-adenosyl-L-methionine (Cx-SAM) to 5-hydroxyuridine (ho5U) to form 5-carboxymethoxyuridine (cmo5U) at position 34 in tRNAs. This is tRNA U34 carboxymethyltransferase from Idiomarina loihiensis (strain ATCC BAA-735 / DSM 15497 / L2-TR).